The following is a 233-amino-acid chain: Rano class II histocompatibility antigen, A beta chain (233 aa).

Residues 1 to 80 (DFVYQFKGLC…DTVCRYNYEE (80 aa)) form a beta-1 region. Over 1-194 (DFVYQFKGLC…RAQSESAQSK (194 aa)) the chain is Extracellular. Asn-14 is a glycosylation site (N-linked (GlcNAc...) asparagine). The interval 81–184 (TEVPTSLRRL…SLESPVTVEW (104 aa)) is beta-2. Positions 93 to 181 (PNVAISLSRT…DHASLESPVT (89 aa)) constitute an Ig-like C1-type domain. The tract at residues 185–194 (RAQSESAQSK) is connecting peptide. Residues 195 to 215 (MLSGIGGLVLGVIFLGLGLFI) traverse the membrane as a helical segment. The Cytoplasmic portion of the chain corresponds to 216–233 (RHKRQKGPQGPPPAGLLQ).

This sequence belongs to the MHC class II family.

It is found in the membrane. In terms of biological role, involved in the presentation of foreign antigens to the immune system. The protein is Rano class II histocompatibility antigen, A beta chain (RT1-B) of Rattus norvegicus (Rat).